Consider the following 910-residue polypeptide: Valine--tRNA ligase (910 aa).

The 'HIGH' region signature appears at 45–55; it reads PNVTGSLHMGH. Residues 554–558 carry the 'KMSKS' region motif; that stretch reads KMSKS. Residue lysine 557 participates in ATP binding. Residues 842–910 adopt a coiled-coil conformation; that stretch reads DLQAEAARLA…TAESRIRDAS (69 aa).

The protein belongs to the class-I aminoacyl-tRNA synthetase family. ValS type 1 subfamily. Monomer.

It is found in the cytoplasm. It carries out the reaction tRNA(Val) + L-valine + ATP = L-valyl-tRNA(Val) + AMP + diphosphate. Catalyzes the attachment of valine to tRNA(Val). As ValRS can inadvertently accommodate and process structurally similar amino acids such as threonine, to avoid such errors, it has a 'posttransfer' editing activity that hydrolyzes mischarged Thr-tRNA(Val) in a tRNA-dependent manner. In Brucella suis biovar 1 (strain 1330), this protein is Valine--tRNA ligase.